The following is a 137-amino-acid chain: uncharacterized protein (137 aa).

Residues 20-42 (TVLAFKGEGALALAGLLVMAAVA) traverse the membrane as a helical segment.

It localises to the host membrane. This is an uncharacterized protein from Dryophytes versicolor (chameleon treefrog).